A 681-amino-acid chain; its full sequence is DNA ligase (681 aa).

NAD(+) contacts are provided by residues 44–48, 94–95, and Glu-124; these read DYIYD and SL. Catalysis depends on Lys-126, which acts as the N6-AMP-lysine intermediate. NAD(+) is bound by residues Arg-147, Glu-181, Lys-297, and Lys-321. Residues Cys-415, Cys-418, Cys-433, and Cys-438 each contribute to the Zn(2+) site. The BRCT domain occupies 598–681; the sequence is DETSFFYGKK…EAQAKEGTDK (84 aa).

This sequence belongs to the NAD-dependent DNA ligase family. LigA subfamily. Mg(2+) is required as a cofactor. It depends on Mn(2+) as a cofactor.

It carries out the reaction NAD(+) + (deoxyribonucleotide)n-3'-hydroxyl + 5'-phospho-(deoxyribonucleotide)m = (deoxyribonucleotide)n+m + AMP + beta-nicotinamide D-nucleotide.. In terms of biological role, DNA ligase that catalyzes the formation of phosphodiester linkages between 5'-phosphoryl and 3'-hydroxyl groups in double-stranded DNA using NAD as a coenzyme and as the energy source for the reaction. It is essential for DNA replication and repair of damaged DNA. The polypeptide is DNA ligase (Leuconostoc citreum (strain KM20)).